A 75-amino-acid polypeptide reads, in one-letter code: Protein EGO2 (75 aa).

This is Protein EGO2 from Saccharomyces cerevisiae (strain ATCC 204508 / S288c) (Baker's yeast).